The chain runs to 475 residues: Early growth response protein 1-B (475 aa).

2 disordered regions span residues 109–180 (NVSS…TASI) and 264–285 (PSRM…RPYA). Over residues 111–140 (SSSSAPSSSPSSSSSSSSSSSSQSPPLSCS) the composition is skewed to low complexity. A compositionally biased stretch (polar residues) spans 170-179 (QPFQNASTAS). 3 C2H2-type zinc fingers span residues 284-308 (YACP…IRIH), 314-336 (FQCR…IRTH), and 342-364 (FACD…TKIH). A disordered region spans residues 355 to 379 (DERKRHTKIHLRQKDKKADKATPVS). The span at 359–369 (RHTKIHLRQKD) shows a compositional bias: basic residues.

It belongs to the EGR C2H2-type zinc-finger protein family.

Its subcellular location is the nucleus. The protein localises to the cytoplasm. Functionally, transcriptional regulator. Recognizes and binds to the DNA sequence 5'-GCG(T/G)GGGCG-3'(EGR-site) in the promoter region of target genes. Binds double-stranded target DNA, irrespective of the cytosine methylation status. Regulates the transcription of numerous target genes, and thereby plays an important role in regulating the response to growth factors, DNA damage, and ischemia. Plays a role in the regulation of cell survival, proliferation and cell death. Mediates responses to ischemia and hypoxia; regulates the expression of proteins that are involved in inflammatory processes. Plays a role in regulating the expression of circadian clock genes. This Xenopus laevis (African clawed frog) protein is Early growth response protein 1-B (egr1-b).